Consider the following 142-residue polypeptide: Hemoglobin subunit alpha-B (142 aa).

In terms of domain architecture, Globin spans 2–142 (PFSASDRHDI…VSETLYSKYR (141 aa)). Position 59 (Gln59) interacts with O2. His88 serves as a coordination point for heme b.

The protein belongs to the globin family. In terms of assembly, heterotetramer of either two alpha-B chains or two alpha-C chains and two beta chains. The two major hemoglobins, B and C, associate upon deoxygenation to form a trimer of tetramers, BC2, that has a much lower affinity for oxygen than either component alone. As to expression, red blood cells.

Functionally, the alpha-B chain is a component of adult hemoglobin B. In Aquarana catesbeiana (American bullfrog), this protein is Hemoglobin subunit alpha-B.